We begin with the raw amino-acid sequence, 177 residues long: Flavodoxin (177 aa).

The Flavodoxin-like domain maps to 4 to 173 (IGIFFGSDTG…RIDTWLDKLK (170 aa)).

It belongs to the flavodoxin family. The cofactor is FMN.

Functionally, low-potential electron donor to a number of redox enzymes. NifF is the electron donor to nitrogenase. This is Flavodoxin (nifF) from Enterobacter agglomerans (Erwinia herbicola).